The chain runs to 296 residues: MPHTLLILNGKESGNPEVREAVKNVRDEGLTLHVRITWEHGDAKRYVEEAATLAVSTVIAGGGDGTINEVATALMSLPADKRPCLGILPLGTANDFATGCNIPLQIENALQLAVKGRAVAIDLAQVNGEHYFINMATGGFGTRITTETPDKLKAALGGVSYFIHGLMRLDALKADSCKIHGPDFHWSGDALVIGIGNGKQAGGGQLLCPDALINDGLMQLRLLTAKELLPAVLSTLFNGEKNKNVIDATVPWLDITAPNDITFNLDGEPLSGRYFHIEILPHAIQCRLPPNCPLLG.

The 130-residue stretch at 1-130 (MPHTLLILNG…IDLAQVNGEH (130 aa)) folds into the DAGKc domain. ATP-binding positions include T37, 63–69 (GDGTINE), and T92. Mg(2+)-binding residues include L212, D215, and L217. Residue E268 is the Proton acceptor of the active site.

The protein belongs to the diacylglycerol/lipid kinase family. YegS lipid kinase subfamily. Mg(2+) serves as cofactor. Requires Ca(2+) as cofactor.

Its subcellular location is the cytoplasm. Probably phosphorylates lipids; the in vivo substrate is unknown. This chain is Probable lipid kinase YegS-like, found in Yersinia pseudotuberculosis serotype I (strain IP32953).